Here is a 118-residue protein sequence, read N- to C-terminus: V-type proton ATPase subunit G 2 (118 aa).

The stretch at 8–57 forms a coiled coil; that stretch reads IQQLLQAEKRAAEKVADARKRKARRLKQAKEEAQMEVDQYRREREQEFQS. A disordered region spans residues 25-90; the sequence is ARKRKARRLK…VQGMQSSQQR (66 aa). A compositionally biased stretch (basic and acidic residues) spans 35–55; the sequence is QAKEEAQMEVDQYRREREQEF. Polar residues-rich tracts occupy residues 56–69 and 78–89; these read QSKQ…QGNL and RRQVQGMQSSQQ.

Belongs to the V-ATPase G subunit family. V-ATPase is a heteromultimeric enzyme made up of two complexes: the ATP-hydrolytic V1 complex and the proton translocation V0 complex. The V1 complex consists of three catalytic AB heterodimers that form a heterohexamer, three peripheral stalks each consisting of EG heterodimers, one central rotor including subunits D and F, and the regulatory subunits C and H. The proton translocation complex V0 consists of the proton transport subunit a, a ring of proteolipid subunits c9c'', rotary subunit d, subunits e and f, and the accessory subunits ATP6AP1/Ac45 and ATP6AP2/PRR. Expressed in brain (at protein level).

Its subcellular location is the melanosome. It is found in the cytoplasmic vesicle. It localises to the clathrin-coated vesicle membrane. In terms of biological role, subunit of the V1 complex of vacuolar(H+)-ATPase (V-ATPase), a multisubunit enzyme composed of a peripheral complex (V1) that hydrolyzes ATP and a membrane integral complex (V0) that translocates protons. V-ATPase is responsible for acidifying and maintaining the pH of intracellular compartments and in some cell types, is targeted to the plasma membrane, where it is responsible for acidifying the extracellular environment. The sequence is that of V-type proton ATPase subunit G 2 from Bos taurus (Bovine).